The primary structure comprises 254 residues: Glutamate racemase (254 aa).

Residues 7–8 and 39–40 contribute to the substrate site; these read DS and YG. Catalysis depends on Cys-70, which acts as the Proton donor/acceptor. Residue 71 to 72 coordinates substrate; the sequence is NT. Cys-178 acts as the Proton donor/acceptor in catalysis. Residue 179–180 participates in substrate binding; the sequence is TH.

Belongs to the aspartate/glutamate racemases family.

The catalysed reaction is L-glutamate = D-glutamate. It functions in the pathway cell wall biogenesis; peptidoglycan biosynthesis. Its function is as follows. Provides the (R)-glutamate required for cell wall biosynthesis. The sequence is that of Glutamate racemase from Aquifex aeolicus (strain VF5).